A 66-amino-acid polypeptide reads, in one-letter code: Beta-toxin Chui3 (66 aa).

Residues 1-66 (KEGYLVELGT…VWPLKNKTCR (66 aa)) enclose the LCN-type CS-alpha/beta domain. 4 disulfides stabilise this stretch: Cys-12–Cys-65, Cys-16–Cys-41, Cys-25–Cys-46, and Cys-29–Cys-48.

Belongs to the long (4 C-C) scorpion toxin superfamily. Sodium channel inhibitor family. Beta subfamily. Expressed by the venom gland.

The protein resides in the secreted. Beta toxins bind voltage-independently at site-4 of sodium channels (Nav) and shift the voltage of activation toward more negative potentials thereby affecting sodium channel activation and promoting spontaneous and repetitive firing. Acts on human sodium channel Nav1.6/SCN8A. The polypeptide is Beta-toxin Chui3 (Centruroides huichol (Scorpion)).